The chain runs to 81 residues: Protein Vpu (81 aa).

Topologically, residues 1 to 7 (MQPLGII) are extracellular. The chain crosses the membrane as a helical span at residues 8–28 (AIAALVVAIILAIVVWTIVFI). Over 29 to 81 (EYRRIKKQRRIDCLLDRITERAEDSGNESEGDREKLSKLVEMGHHAPWDIDDL) the chain is Cytoplasmic. 2 positions are modified to phosphoserine; by host CK2: Ser-53 and Ser-57.

The protein belongs to the HIV-1 VPU protein family. As to quaternary structure, homopentamer. Interacts with host CD4 and BRTC; these interactions induce proteasomal degradation of CD4. Interacts with host BST2; this interaction leads to the degradation of host BST2. Interacts with host FBXW11. Interacts with host AP1M1; this interaction plays a role in the mistrafficking and subsequent degradation of host BST2. Interacts with host RANBP2; this interaction allows Vpu to down-regulate host BLM sumoylation. Post-translationally, phosphorylated by host CK2. This phosphorylation is necessary for interaction with human BTRC and degradation of CD4.

It is found in the host membrane. Ion channel activity is inhibited by hexamethylene amiloride in vitro. Its function is as follows. Enhances virion budding by targeting host CD4 and Tetherin/BST2 to proteasome degradation. Degradation of CD4 prevents any unwanted premature interactions between viral Env and its host receptor CD4 in the endoplasmic reticulum. Degradation of antiretroviral protein Tetherin/BST2 is important for virion budding, as BST2 tethers new viral particles to the host cell membrane. Mechanistically, Vpu bridges either CD4 or BST2 to BTRC, a substrate recognition subunit of the Skp1/Cullin/F-box protein E3 ubiquitin ligase, induces their ubiquitination and subsequent proteasomal degradation. The alteration of the E3 ligase specificity by Vpu seems to promote the degradation of host IKBKB, leading to NF-kappa-B down-regulation and subsequent apoptosis. Acts as a viroporin that forms an oligomeric ion channel in membranes. Modulates the host DNA repair mechanisms to promote degradation of nuclear viral cDNA in cells that are already productively infected in order to suppress immune sensing and proviral hyper-integration (superinfection). Manipulates PML-NBs and modulates SUMOylation of host BLM protein thereby enhancing its DNA-end processing activity toward viral unintegrated linear DNA. Also inhibits RAD52-mediated homologous repair of viral cDNA, preventing the generation of dead-end circular forms of single copies of the long terminal repeat and permitting sustained nucleolytic attack. This chain is Protein Vpu, found in Human immunodeficiency virus type 1 group M subtype D (isolate ELI) (HIV-1).